The primary structure comprises 84 residues: Putative regulatory protein Hore_09800 (84 aa).

Belongs to the RemA family.

In Halothermothrix orenii (strain H 168 / OCM 544 / DSM 9562), this protein is Putative regulatory protein Hore_09800.